The primary structure comprises 471 residues: Eremophilane O-acetyltransferase ORF8 (471 aa).

The protein belongs to the fumigaclavine B O-acetyltransferase family. In terms of assembly, monomer.

It participates in sesquiterpene biosynthesis. Functionally, O-acetyltransferase; part of the gene cluster that mediates the biosynthesis of PR-toxin, a bicyclic sesquiterpene belonging to the eremophilane class and acting as a mycotoxin. The first step of the pathway is catalyzed by the aristolochene synthase which performs the cyclization of trans,trans-farnesyl diphosphate (FPP) to the bicyclic sesquiterpene aristolochene. Following the formation of aristolochene, the non-oxygenated aristolochene is converted to the trioxygenated intermediate eremofortin B, via 7-epi-neopetasone. This conversion appears to involve three enzymes, a hydroxysterol oxidase-like enzyme, the quinone-oxidase prx3 that forms the quinone-type-structure in the bicyclic nucleus of aristolochene with the C8-oxo group and the C-3 hydroxyl group, and the P450 monooxygenase ORF6 that introduces the epoxide at the double bond between carbons 1 and 2. No monoxy or dioxy-intermediates have been reported to be released to the broth, so these three early oxidative reactions may be coupled together. Eremofortin B is further oxidized by another P450 monooxygenase, that introduces a second epoxide between carbons 7 and 11 prior to acetylation to eremofortin A by the acetyltransferase ORF8. The second epoxidation may be performed by a second P450 monooxygenase. After the acetylation step, eremofortin A is converted to eremofortin C and then to PR-toxin. First the conversion of eremofortin A to eremofortin C proceeds by oxidation of the side chain of the molecule at C-12 and is catalyzed by the short-chain oxidoreductase prx1. The cytochrome P450 monooxygenase ORF6 is probably also involved in this step. The primary alcohol formed at C-12 is finally oxidized by the short-chain alcohol dehydrogenase prx4 that forms PR-toxin. The sequence is that of Eremophilane O-acetyltransferase ORF8 from Penicillium roqueforti (strain FM164).